The sequence spans 305 residues: MSSVDEFLTYLQVERQVSAHTLDAYRRDLAALVVWASEQKTDDGVQDAAVPAETAQFDSAHLRQFVAAEHRRGLSAKSLQRRLSACRSYYAWLLKRGRISASPAAALRAPKAPRKLPQVLDADEAVRLVEVPTDAPLGLRDRALLEVFYSSGLRLSELCALRWRDLDLDSGLVMVLGKGSKQRLVPVGSHAIAALREWRRDSGASADSHVFPGRAGGAISQRAVQIRIKQLAVRQGMFKDVHPHMLRHSFASHILESSGDLRGVQELLGHSDIATTQIYTHLDFQHLAKVYDAAHPRARRKKAAE.

In terms of domain architecture, Core-binding (CB) spans 1–94; that stretch reads MSSVDEFLTY…ACRSYYAWLL (94 aa). The region spanning 115-292 is the Tyr recombinase domain; it reads KLPQVLDADE…DFQHLAKVYD (178 aa). Active-site residues include arginine 154, lysine 178, histidine 244, arginine 247, and histidine 270. Residue tyrosine 279 is the O-(3'-phospho-DNA)-tyrosine intermediate of the active site.

The protein belongs to the 'phage' integrase family. XerC subfamily. In terms of assembly, forms a cyclic heterotetrameric complex composed of two molecules of XerC and two molecules of XerD.

Its subcellular location is the cytoplasm. Functionally, site-specific tyrosine recombinase, which acts by catalyzing the cutting and rejoining of the recombining DNA molecules. The XerC-XerD complex is essential to convert dimers of the bacterial chromosome into monomers to permit their segregation at cell division. It also contributes to the segregational stability of plasmids. The polypeptide is Tyrosine recombinase XerC (Xanthomonas axonopodis pv. citri (strain 306)).